Consider the following 282-residue polypeptide: Globin-related protein glb-13 (282 aa).

A disordered region spans residues 1–46 (MGQENSKCPHQSLAEKRYKVERPKTKKVSSGSATERCLSTQSDEKN). The span at 13-23 (LAEKRYKVERP) shows a compositional bias: basic and acidic residues. Positions 28-41 (VSSGSATERCLSTQ) are enriched in polar residues. In terms of domain architecture, Globin spans 100–249 (FLTRRERILL…IISFMRRGFD (150 aa)). His-162 and His-194 together coordinate heme b.

It belongs to the globin family.

Functionally, involved in oxidative stress resistance. This is Globin-related protein glb-13 from Caenorhabditis elegans.